Consider the following 313-residue polypeptide: Ketimine reductase mu-crystallin (313 aa).

A 3,3',5-triiodo-L-thyronine-binding site is contributed by arginine 47. Residues serine 90, histidine 91, arginine 118, alanine 143, valine 145, glutamine 146, asparagine 167, arginine 168, threonine 169, asparagine 172, threonine 204, methionine 205, and valine 225 each contribute to the NADPH site. Glutamate 256 is a binding site for 3,3',5-triiodo-L-thyronine. Serine 291 is an NADPH binding site.

This sequence belongs to the ornithine cyclodeaminase/mu-crystallin family. Homodimer. Binds the thyroid hormone triiodothyronine (T3); T3 binding inhibits enzymatic activity. As to expression, expressed in the spiral ligament of the cochlea (at protein level).

The protein resides in the cytoplasm. It catalyses the reaction L-pipecolate + NADP(+) = Delta(1)-piperideine-2-carboxylate + NADPH + H(+). The enzyme catalyses L-pipecolate + NAD(+) = Delta(1)-piperideine-2-carboxylate + NADH + H(+). The catalysed reaction is L-proline + NADP(+) = 1-pyrroline-2-carboxylate + NADPH + H(+). It carries out the reaction L-proline + NAD(+) = 1-pyrroline-2-carboxylate + NADH + H(+). It catalyses the reaction (3R)-1,4-thiomorpholine-3-carboxylate + NAD(+) = 3,4-dehydrothiomorpholine-3-carboxylate + NADH + 2 H(+). The enzyme catalyses (3R)-1,4-thiomorpholine-3-carboxylate + NADP(+) = 3,4-dehydrothiomorpholine-3-carboxylate + NADPH + 2 H(+). The catalysed reaction is (S)-cystathionine ketimine + NADH + 2 H(+) = (3R,5S)-2,3,5,6,7-pentahydro-1,4-thiazepine-3,5-dicarboxylate + NAD(+). It carries out the reaction (S)-cystathionine ketimine + NADPH + 2 H(+) = (3R,5S)-2,3,5,6,7-pentahydro-1,4-thiazepine-3,5-dicarboxylate + NADP(+). It catalyses the reaction (R)-lanthionine ketimine + NADPH + 2 H(+) = (3R,5R)-1,4-thiomorpholine-3,5-dicarboxylate + NADP(+). The enzyme catalyses Delta(2)-thiazoline-2-carboxylate + NADPH + 2 H(+) = L-thiazolidine-2-carboxylate + NADP(+). Its function is as follows. Catalyzes the NAD(P)H-dependent reduction of imine double bonds of a number of cyclic ketimine substrates, including sulfur-containing cyclic ketimines. Under physiological conditions, it efficiently catalyzes delta(1)-piperideine-2-carboxylate (P2C) and delta(1)-pyrroline-2-carboxylate (Pyr2C) reduction, suggesting a central role in lysine and glutamate metabolism. Additional substrates are delta(2)-thiazoline-2-carboxylate (T2C), 3,4-dehydrothiomorpholine-3-carboxylate (AECK), and (R)-lanthionine ketimine (LK) that is reduced at very low rate compared to other substrates. Also catalyzes the NAD(P)H-dependent reduction of (S)-cystathionine ketimine (CysK). The chain is Ketimine reductase mu-crystallin from Mus musculus (Mouse).